The chain runs to 312 residues: R2-like ligand binding oxidase (312 aa).

Residues Glu68, Glu101, and His104 each contribute to the Mn(2+) site. Residues 71-162 (VTQDIQPFMA…AAQVRASATY (92 aa)) constitute a cross-link (3-(O4'-tyrosyl)-valine (Val-Tyr)). Glu101 contributes to the Fe cation binding site. Residues Glu167, Glu202, and His205 each coordinate Fe cation.

It belongs to the ribonucleoside diphosphate reductase small chain family. R2-like ligand binding oxidase subfamily. In terms of assembly, homodimer. The cofactor is Fe cation. Mn(2+) serves as cofactor.

Its function is as follows. Probable oxidase that might be involved in lipid metabolism. The chain is R2-like ligand binding oxidase from Mycobacterium sp. (strain JLS).